A 152-amino-acid chain; its full sequence is Methylglyoxal synthase (152 aa).

In terms of domain architecture, MGS-like spans Arg-6–Lys-152. Substrate is bound by residues His-19, Lys-23, Thr-45–Thr-48, and Ser-65–Gly-66. The active-site Proton donor/acceptor is Asp-71. Residue His-98 coordinates substrate.

This sequence belongs to the methylglyoxal synthase family.

The catalysed reaction is dihydroxyacetone phosphate = methylglyoxal + phosphate. Functionally, catalyzes the formation of methylglyoxal from dihydroxyacetone phosphate. This chain is Methylglyoxal synthase, found in Pectobacterium atrosepticum (strain SCRI 1043 / ATCC BAA-672) (Erwinia carotovora subsp. atroseptica).